Consider the following 786-residue polypeptide: DNA ligase (786 aa).

NAD(+) is bound by residues 32–36 (DAEYD), 81–82 (SL), and glutamate 121. Catalysis depends on lysine 123, which acts as the N6-AMP-lysine intermediate. NAD(+) contacts are provided by arginine 144, glutamate 181, lysine 297, and lysine 321. Zn(2+) contacts are provided by cysteine 415, cysteine 418, cysteine 445, and cysteine 451. One can recognise a BRCT domain in the interval 703–786 (AEGLPLAGQT…EQLKSYGIEA (84 aa)).

The protein belongs to the NAD-dependent DNA ligase family. LigA subfamily. Mg(2+) serves as cofactor. It depends on Mn(2+) as a cofactor.

The enzyme catalyses NAD(+) + (deoxyribonucleotide)n-3'-hydroxyl + 5'-phospho-(deoxyribonucleotide)m = (deoxyribonucleotide)n+m + AMP + beta-nicotinamide D-nucleotide.. Functionally, DNA ligase that catalyzes the formation of phosphodiester linkages between 5'-phosphoryl and 3'-hydroxyl groups in double-stranded DNA using NAD as a coenzyme and as the energy source for the reaction. It is essential for DNA replication and repair of damaged DNA. The sequence is that of DNA ligase from Ectopseudomonas mendocina (strain ymp) (Pseudomonas mendocina).